The sequence spans 827 residues: Lon protease (827 aa).

Residues 1 to 27 form a disordered region; the sequence is MNDETLREQTTAESEETSPTTPSPEPE. The Lon N-terminal domain occupies 32–225; that stretch reads LPLIPLEGAV…KVLMFYRKQF (194 aa). 385–392 contributes to the ATP binding site; the sequence is GPPGVGKT. The Lon proteolytic domain maps to 625-806; sequence IDQPGVAIGL…DEVLSIALLP (182 aa). Catalysis depends on residues Ser712 and Lys755.

The protein belongs to the peptidase S16 family. Homohexamer. Organized in a ring with a central cavity.

The protein resides in the cytoplasm. The enzyme catalyses Hydrolysis of proteins in presence of ATP.. Functionally, ATP-dependent serine protease that mediates the selective degradation of mutant and abnormal proteins as well as certain short-lived regulatory proteins. Required for cellular homeostasis and for survival from DNA damage and developmental changes induced by stress. Degrades polypeptides processively to yield small peptide fragments that are 5 to 10 amino acids long. Binds to DNA in a double-stranded, site-specific manner. The protein is Lon protease of Chloroflexus aurantiacus (strain ATCC 29366 / DSM 635 / J-10-fl).